Consider the following 532-residue polypeptide: uncharacterized protein (532 aa).

A run of 14 helical transmembrane segments spans residues 25-45, 65-85, 109-129, 134-154, 179-199, 203-223, 248-268, 302-322, 344-364, 371-391, 392-412, 425-445, 459-479, and 494-514; these read ITKILSAVYRVPFQNIVGDVG, SGFPVIISKLMNDYSEKNHHT, AVPIALFMGDSHLAVLIQVAA, LFPFVALLRGGFQGRHEMLPS, KGASLYTAGAAAASGSLAGSL, IILGFFWFKTKRDNQTDRQNE, LLLFIQLVDALNLYALLSGGE, VPYISMAVKNKELKIMKEKIT, KPVNIMLFQNGEGTGALQVFS, SLAVTAAAVLQGAGYTVFPAI, AVGAGVAVKWVLNTLLVPRYG, AAVAGLNLYQLRQKEWLDKLR, SAVLLAYTRLWTFLFPATGRG, and AVFIYCMMRLGIFTDEELNSV.

It belongs to the polysaccharide synthase family.

Its subcellular location is the cell membrane. This is an uncharacterized protein from Bacillus subtilis (strain 168).